We begin with the raw amino-acid sequence, 183 residues long: Nucleoside triphosphate pyrophosphatase (183 aa).

Aspartate 71 acts as the Proton acceptor in catalysis.

It belongs to the Maf family. The cofactor is a divalent metal cation.

It is found in the cytoplasm. It catalyses the reaction a ribonucleoside 5'-triphosphate + H2O = a ribonucleoside 5'-phosphate + diphosphate + H(+). The catalysed reaction is a 2'-deoxyribonucleoside 5'-triphosphate + H2O = a 2'-deoxyribonucleoside 5'-phosphate + diphosphate + H(+). In terms of biological role, nucleoside triphosphate pyrophosphatase. May have a dual role in cell division arrest and in preventing the incorporation of modified nucleotides into cellular nucleic acids. The polypeptide is Nucleoside triphosphate pyrophosphatase (Campylobacter jejuni subsp. doylei (strain ATCC BAA-1458 / RM4099 / 269.97)).